Consider the following 293-residue polypeptide: Phosphoribosylaminoimidazole-succinocarboxamide synthase (293 aa).

This sequence belongs to the SAICAR synthetase family.

The enzyme catalyses 5-amino-1-(5-phospho-D-ribosyl)imidazole-4-carboxylate + L-aspartate + ATP = (2S)-2-[5-amino-1-(5-phospho-beta-D-ribosyl)imidazole-4-carboxamido]succinate + ADP + phosphate + 2 H(+). It participates in purine metabolism; IMP biosynthesis via de novo pathway; 5-amino-1-(5-phospho-D-ribosyl)imidazole-4-carboxamide from 5-amino-1-(5-phospho-D-ribosyl)imidazole-4-carboxylate: step 1/2. The sequence is that of Phosphoribosylaminoimidazole-succinocarboxamide synthase from Desulfosudis oleivorans (strain DSM 6200 / JCM 39069 / Hxd3) (Desulfococcus oleovorans).